Consider the following 264-residue polypeptide: DNA-directed RNA polymerase subunit Rpo3 (264 aa).

3 residues coordinate [3Fe-4S] cluster: cysteine 203, cysteine 206, and cysteine 209.

Belongs to the archaeal Rpo3/eukaryotic RPB3 RNA polymerase subunit family. As to quaternary structure, part of the RNA polymerase complex. [3Fe-4S] cluster serves as cofactor.

It localises to the cytoplasm. It catalyses the reaction RNA(n) + a ribonucleoside 5'-triphosphate = RNA(n+1) + diphosphate. In terms of biological role, DNA-dependent RNA polymerase (RNAP) catalyzes the transcription of DNA into RNA using the four ribonucleoside triphosphates as substrates. This is DNA-directed RNA polymerase subunit Rpo3 from Archaeoglobus fulgidus (strain ATCC 49558 / DSM 4304 / JCM 9628 / NBRC 100126 / VC-16).